Reading from the N-terminus, the 436-residue chain is 3-ketoacyl-CoA thiolase (436 aa).

The active-site Acyl-thioester intermediate is cysteine 99. Catalysis depends on proton acceptor residues histidine 392 and cysteine 422.

This sequence belongs to the thiolase-like superfamily. Thiolase family. Heterotetramer of two alpha chains (FadJ) and two beta chains (FadI).

The protein resides in the cytoplasm. It catalyses the reaction an acyl-CoA + acetyl-CoA = a 3-oxoacyl-CoA + CoA. It functions in the pathway lipid metabolism; fatty acid beta-oxidation. Its function is as follows. Catalyzes the final step of fatty acid oxidation in which acetyl-CoA is released and the CoA ester of a fatty acid two carbons shorter is formed. The sequence is that of 3-ketoacyl-CoA thiolase from Shewanella sp. (strain W3-18-1).